The chain runs to 111 residues: RNA polymerase-binding protein RbpA (111 aa).

This sequence belongs to the RNA polymerase-binding protein RbpA family. As to quaternary structure, forms a complex with the RNAP catalytic core and with free principal sigma factors.

Binds to RNA polymerase (RNAP), stimulating transcription from principal, but not alternative sigma factor promoters. The polypeptide is RNA polymerase-binding protein RbpA (Mycobacterium tuberculosis (strain CDC 1551 / Oshkosh)).